We begin with the raw amino-acid sequence, 216 residues long: MDNLDLIADEVRKCQKCKLWKFRKNAVPGEGNSKAEIMFIGEAPGENEDIEGKPFVGVAGKLLTRLINEILGLSREDVFITNLVKCRPPNNRDPEEDEILACSPYLTRQIESIRPHIIITLGRHSTSYLFKKMNMKMESIGKVRGKFYTWNIYGYKILVFPTYHPAAALYNPPIRKVLEEDFRKVKEALSSKPITLDNFLYGSGDKGEKGNSNSGK.

[4Fe-4S] cluster contacts are provided by C14 and C17. Uracil-binding positions include 41–43, F55, and N82; that span reads GEA. Residues C86 and C102 each coordinate [4Fe-4S] cluster. H164 serves as a coordination point for uracil.

It belongs to the uracil-DNA glycosylase (UDG) superfamily. Type 4 (UDGa) family. In terms of assembly, interacts with the sliding clamp PCNA3 subunit.

It catalyses the reaction Hydrolyzes single-stranded DNA or mismatched double-stranded DNA and polynucleotides, releasing free uracil.. In terms of biological role, removes uracil bases that are present in DNA as a result of either deamination of cytosine or misincorporation of dUMP instead of dTMP. Can remove uracil from double-stranded DNA containing either a U/G or U/A base pair as well as from single-stranded DNA. The protein is Type-4 uracil-DNA glycosylase of Saccharolobus solfataricus (strain ATCC 35092 / DSM 1617 / JCM 11322 / P2) (Sulfolobus solfataricus).